The chain runs to 108 residues: Probable 4-amino-4-deoxy-L-arabinose-phosphoundecaprenol flippase subunit ArnE (108 aa).

A run of 3 helical transmembrane segments spans residues 36–56 (SLWL…LVLQ), 58–78 (LDVG…TLAG), and 85–105 (PVDV…FQLG).

The protein belongs to the ArnE family. Heterodimer of ArnE and ArnF.

It localises to the cell inner membrane. Its pathway is bacterial outer membrane biogenesis; lipopolysaccharide biosynthesis. Functionally, translocates 4-amino-4-deoxy-L-arabinose-phosphoundecaprenol (alpha-L-Ara4N-phosphoundecaprenol) from the cytoplasmic to the periplasmic side of the inner membrane. The chain is Probable 4-amino-4-deoxy-L-arabinose-phosphoundecaprenol flippase subunit ArnE from Pseudomonas syringae pv. syringae (strain B728a).